Consider the following 209-residue polypeptide: Protein GrpE (209 aa).

The interval 1 to 63 (MKKSRKKENM…NPEEACREEN (63 aa)) is disordered. Basic and acidic residues-rich tracts occupy residues 7–42 (KENM…KVSP) and 50–63 (EAEK…REEN).

Belongs to the GrpE family. Homodimer.

Its subcellular location is the cytoplasm. Functionally, participates actively in the response to hyperosmotic and heat shock by preventing the aggregation of stress-denatured proteins, in association with DnaK and GrpE. It is the nucleotide exchange factor for DnaK and may function as a thermosensor. Unfolded proteins bind initially to DnaJ; upon interaction with the DnaJ-bound protein, DnaK hydrolyzes its bound ATP, resulting in the formation of a stable complex. GrpE releases ADP from DnaK; ATP binding to DnaK triggers the release of the substrate protein, thus completing the reaction cycle. Several rounds of ATP-dependent interactions between DnaJ, DnaK and GrpE are required for fully efficient folding. The sequence is that of Protein GrpE from Methanosarcina mazei (strain ATCC BAA-159 / DSM 3647 / Goe1 / Go1 / JCM 11833 / OCM 88) (Methanosarcina frisia).